We begin with the raw amino-acid sequence, 260 residues long: MFEARLVQGSILKKVLEALKDLITEACWDVSSSGISLQSMDSSHVSLVQLTLRHDGFDSYRCDRNLAMGVNLSSMSKILKCAGNEDIITLRAEDNADTLALVFETLNQEKVSDYEMKLMDLDVEQLGIPEQEYSCVVKMPSGEFARICRDLSQIGDAVMISCAKDGVKFSASGELGTGNIKLSQTSNVDKEDEAVTIEMNEPVQLIFALNYLNFFTKATPLSKTVTLSMSADIPLVVEYKIADMGHIKYYLAPKIDEEAS.

The DNA-binding element occupies 61–80 (RCDRNLAMGVNLSSMSKILK). Lys164 is covalently cross-linked (Glycyl lysine isopeptide (Lys-Gly) (interchain with G-Cter in ubiquitin)).

Belongs to the PCNA family. As to quaternary structure, homotrimer. Forms a complex with activator 1 heteropentamer in the presence of ATP. Component of the replisome complex. Post-translationally, monoubiquitinated by the ube2b-rad18 complex on Lys-164. Monoubiquitination at Lys-164 also takes place in undamaged proliferating cells, and is mediated by the dcx(dtl) complex, leading to enhance PCNA-dependent translesion DNA synthesis.

The protein localises to the nucleus. In terms of biological role, this protein is an auxiliary protein of DNA polymerase delta and is involved in the control of eukaryotic DNA replication by increasing the polymerase's processibility during elongation of the leading strand. The protein is Proliferating cell nuclear antigen (pcna) of Haplochromis burtoni (Burton's mouthbrooder).